The following is a 264-amino-acid chain: Diphthine synthase (264 aa).

S-adenosyl-L-methionine-binding positions include leucine 9, aspartate 84, valine 87, serine 112–isoleucine 113, leucine 164, alanine 207, and histidine 232.

The protein belongs to the diphthine synthase family. As to quaternary structure, homodimer.

The catalysed reaction is 2-[(3S)-amino-3-carboxypropyl]-L-histidyl-[translation elongation factor 2] + 3 S-adenosyl-L-methionine = diphthine-[translation elongation factor 2] + 3 S-adenosyl-L-homocysteine + 3 H(+). The protein operates within protein modification; peptidyl-diphthamide biosynthesis. S-adenosyl-L-methionine-dependent methyltransferase that catalyzes the trimethylation of the amino group of the modified target histidine residue in translation elongation factor 2 (EF-2), to form an intermediate called diphthine. The three successive methylation reactions represent the second step of diphthamide biosynthesis. The sequence is that of Diphthine synthase from Methanothermobacter thermautotrophicus (strain ATCC 29096 / DSM 1053 / JCM 10044 / NBRC 100330 / Delta H) (Methanobacterium thermoautotrophicum).